The primary structure comprises 362 residues: ATP synthase F(1) complex catalytic subunit beta, mitochondrial (362 aa).

N6-acetyllysine; alternate is present on Lys-14. Position 14 is an N6-succinyllysine; alternate (Lys-14). Residue Lys-51 is modified to N6-acetyllysine. Residues Val-62, Val-63, Gly-64, Lys-65, Thr-66, and Val-67 each contribute to the ADP site. Val-62 is a binding site for ATP. Positions 62, 63, 64, 65, and 66 each coordinate phosphate. ATP-binding residues include Gly-64, Lys-65, Thr-66, and Val-67. Residue Thr-66 participates in Mg(2+) binding. Glu-91 serves as a coordination point for Mg(2+). 2 positions are modified to N6-acetyllysine; alternate: Lys-112 and Lys-117. N6-succinyllysine; alternate is present on residues Lys-112 and Lys-117. Thr-165 is modified (phosphothreonine). Lys-279 is modified (N6-acetyllysine). The residue at position 286 (Ser-286) is a Phosphoserine. N6-acetyllysine occurs at positions 333 and 338.

The protein belongs to the ATPase alpha/beta chains family. As to quaternary structure, homotrimer. Component of the ATP synthase complex composed at least of ATP5F1A/subunit alpha, ATP5F1B/subunit beta, ATP5MC1/subunit c (homooctomer), MT-ATP6/subunit a, MT-ATP8/subunit 8, ATP5ME/subunit e, ATP5MF/subunit f, ATP5MG/subunit g, ATP5MK/subunit k, ATP5MJ/subunit j, ATP5F1C/subunit gamma, ATP5F1D/subunit delta, ATP5F1E/subunit epsilon, ATP5PF/subunit F6, ATP5PB/subunit b, ATP5PD/subunit d, ATP5PO/subunit OSCP. ATP synthase complex consists of a soluble F(1) head domain (subunits alpha(3) and beta(3)) - the catalytic core - and a membrane F(0) domain - the membrane proton channel (subunits c, a, 8, e, f, g, k and j). These two domains are linked by a central stalk (subunits gamma, delta, and epsilon) rotating inside the F1 region and a stationary peripheral stalk (subunits F6, b, d, and OSCP). Interacts with PPIF. Interacts with BCL2L1 isoform BCL-X(L); the interaction mediates the association of BCL2L1 isoform BCL-X(L) with the mitochondrial membrane F(1)F(0) ATP synthase and enhances neurons metabolic efficiency. Interacts with CLN5 and PPT1. Interacts with S100A1; this interaction increases F1-ATPase activity. Interacts with MTLN. Interacts with TTC5/STRAP; the interaction results in decreased mitochondrial ATP production.

It localises to the mitochondrion inner membrane. The catalysed reaction is ATP + H2O + 4 H(+)(in) = ADP + phosphate + 5 H(+)(out). Catalytic subunit beta, of the mitochondrial membrane ATP synthase complex (F(1)F(0) ATP synthase or Complex V) that produces ATP from ADP in the presence of a proton gradient across the membrane which is generated by electron transport complexes of the respiratory chain. ATP synthase complex consist of a soluble F(1) head domain - the catalytic core - and a membrane F(1) domain - the membrane proton channel. These two domains are linked by a central stalk rotating inside the F(1) region and a stationary peripheral stalk. During catalysis, ATP synthesis in the catalytic domain of F(1) is coupled via a rotary mechanism of the central stalk subunits to proton translocation. In vivo, can only synthesize ATP although its ATP hydrolase activity can be activated artificially in vitro. With the subunit alpha (ATP5F1A), forms the catalytic core in the F(1) domain. The chain is ATP synthase F(1) complex catalytic subunit beta, mitochondrial from Mesocricetus auratus (Golden hamster).